The primary structure comprises 131 residues: M-zodatoxin-Lt8m (131 aa).

Residues 1–20 form the signal peptide; that stretch reads MKYFVVALALVAAFACIAES. The propeptide occupies 21 to 60; it reads KPAESEHELAEVEEENELADLEDAVWLEHLADLSDLEEAR.

Belongs to the cationic peptide 06 (cytoinsectotoxin) family. Expressed by the venom gland.

The protein localises to the secreted. In terms of biological role, insecticidal, cytolytic and antimicrobial peptide. Forms voltage-dependent, ion-permeable channels in membranes. At high concentration causes cell membrane lysis. The polypeptide is M-zodatoxin-Lt8m (cit 1-13) (Lachesana tarabaevi (Spider)).